Here is a 344-residue protein sequence, read N- to C-terminus: Uroporphyrinogen decarboxylase (344 aa).

Residues 23-27 (RQAGR), D73, Y149, T204, and H321 contribute to the substrate site.

It belongs to the uroporphyrinogen decarboxylase family. Homodimer.

The protein resides in the cytoplasm. The catalysed reaction is uroporphyrinogen III + 4 H(+) = coproporphyrinogen III + 4 CO2. It participates in porphyrin-containing compound metabolism; protoporphyrin-IX biosynthesis; coproporphyrinogen-III from 5-aminolevulinate: step 4/4. Catalyzes the decarboxylation of four acetate groups of uroporphyrinogen-III to yield coproporphyrinogen-III. The chain is Uroporphyrinogen decarboxylase from Francisella philomiragia subsp. philomiragia (strain ATCC 25017 / CCUG 19701 / FSC 153 / O#319-036).